A 161-amino-acid chain; its full sequence is Phosphopantetheine adenylyltransferase (161 aa).

S9 contacts substrate. ATP-binding positions include 9-10 and H17; that span reads SF. Residues K41, T73, and R87 each contribute to the substrate site. ATP contacts are provided by residues 88–90, E98, and 123–129; these read GLR and YSFISST.

Belongs to the bacterial CoaD family. As to quaternary structure, homohexamer. Mg(2+) serves as cofactor.

It is found in the cytoplasm. It carries out the reaction (R)-4'-phosphopantetheine + ATP + H(+) = 3'-dephospho-CoA + diphosphate. It functions in the pathway cofactor biosynthesis; coenzyme A biosynthesis; CoA from (R)-pantothenate: step 4/5. In terms of biological role, reversibly transfers an adenylyl group from ATP to 4'-phosphopantetheine, yielding dephospho-CoA (dPCoA) and pyrophosphate. The sequence is that of Phosphopantetheine adenylyltransferase from Desulforamulus reducens (strain ATCC BAA-1160 / DSM 100696 / MI-1) (Desulfotomaculum reducens).